We begin with the raw amino-acid sequence, 26 residues long: Toxin b subunit alpha (26 aa).

Toxin b is a heterodimer composed of toxin alpha and toxin beta. As to expression, expressed by the venom gland.

It is found in the secreted. Its function is as follows. Binds to sodium channels (Nav) and affects the channel activation process. This chain is Toxin b subunit alpha, found in Androctonus crassicauda (Arabian fat-tailed scorpion).